We begin with the raw amino-acid sequence, 533 residues long: DNA-directed RNA polymerase III subunit RPC3 (533 aa).

The residue at position 194 (S194) is a Phosphoserine. Residues 197-230 (GKGKRRRSSDEDATGEPKAKRPKQTTDNKEPIPD) are disordered. Residues 211–228 (GEPKAKRPKQTTDNKEPI) are compositionally biased toward basic and acidic residues.

This sequence belongs to the eukaryotic RPC3/POLR3C RNA polymerase subunit family. As to quaternary structure, component of the RNA polymerase III complex consisting of 17 subunits: a ten-subunit horseshoe-shaped catalytic core composed of POLR3A/RPC1, POLR3B/RPC2, POLR1C/RPAC1, POLR1D/RPAC2, POLR3K/RPC10, POLR2E/RPABC1, POLR2F/RPABC2, POLR2H/RPABC3, POLR2K/RPABC4 and POLR2L/RPABC5; a mobile stalk composed of two subunits POLR3H/RPC8 and CRCP/RPC9, protruding from the core and functioning primarily in transcription initiation; and additional subunits homologous to general transcription factors of the RNA polymerase II machinery, POLR3C/RPC3-POLR3F/RPC6-POLR3G/RPC7 heterotrimer required for transcription initiation and POLR3D/RPC4-POLR3E/RPC5 heterodimer involved in both transcription initiation and termination. Directly interacts with POLR3G/RPC7 and POLR3GL. Directly interacts with POLR3F/RPC6. Interacts with GTF3C4. As part of the RNA polymerase III complex, interacts with PKP2.

It is found in the nucleus. Its function is as follows. DNA-dependent RNA polymerase catalyzes the transcription of DNA into RNA using the four ribonucleoside triphosphates as substrates. Specific peripheric component of RNA polymerase III (Pol III) which synthesizes small non-coding RNAs including 5S rRNA, snRNAs, tRNAs and miRNAs from at least 500 distinct genomic loci. Part of POLR3C/RPC3-POLR3F/RPC6-POLR3G/RPC7 heterotrimer, coordinates the dynamics of Pol III stalk and clamp modules during the transition from apo to elongation state. Pol III plays a key role in sensing and limiting infection by intracellular bacteria and DNA viruses. Acts as a nuclear and cytosolic DNA sensor involved in innate immune response. Can sense non-self dsDNA that serves as template for transcription into dsRNA. The non-self RNA polymerase III transcripts, such as Epstein-Barr virus-encoded RNAs (EBERs) induce type I interferon and NF-kappa-B through the RIG-I pathway. Preferentially binds single-stranded DNA (ssDNA) in a sequence-independent manner. This is DNA-directed RNA polymerase III subunit RPC3 (POLR3C) from Bos taurus (Bovine).